The sequence spans 230 residues: 3,4-dihydroxy-2-butanone 4-phosphate synthase (230 aa).

Residues 42 to 43 (RE), D47, 155 to 159 (RRGHT), and E179 each bind D-ribulose 5-phosphate. E43 provides a ligand contact to Mg(2+). Residue H158 coordinates Mg(2+).

This sequence belongs to the DHBP synthase family. Homodimer. Mg(2+) is required as a cofactor. Requires Mn(2+) as cofactor.

The catalysed reaction is D-ribulose 5-phosphate = (2S)-2-hydroxy-3-oxobutyl phosphate + formate + H(+). Its pathway is cofactor biosynthesis; riboflavin biosynthesis; 2-hydroxy-3-oxobutyl phosphate from D-ribulose 5-phosphate: step 1/1. In terms of biological role, catalyzes the conversion of D-ribulose 5-phosphate to formate and 3,4-dihydroxy-2-butanone 4-phosphate. In Bordetella bronchiseptica (strain ATCC BAA-588 / NCTC 13252 / RB50) (Alcaligenes bronchisepticus), this protein is 3,4-dihydroxy-2-butanone 4-phosphate synthase.